A 687-amino-acid chain; its full sequence is Glycine--tRNA ligase beta subunit (687 aa).

This sequence belongs to the class-II aminoacyl-tRNA synthetase family. Tetramer of two alpha and two beta subunits.

It localises to the cytoplasm. The catalysed reaction is tRNA(Gly) + glycine + ATP = glycyl-tRNA(Gly) + AMP + diphosphate. The sequence is that of Glycine--tRNA ligase beta subunit from Geotalea daltonii (strain DSM 22248 / JCM 15807 / FRC-32) (Geobacter daltonii).